Consider the following 235-residue polypeptide: NAD(P)H-hydrate epimerase (235 aa).

Residues 18-221 (AAKIDEQLFS…GLVEEHGLQM (204 aa)) enclose the YjeF N-terminal domain. A (6S)-NADPHX-binding site is contributed by 65 to 69 (NNGGD). The K(+) site is built by Asn-66 and Asp-127. (6S)-NADPHX contacts are provided by residues 131-137 (GFSFKPP) and Asp-160. Ser-163 lines the K(+) pocket.

The protein belongs to the NnrE/AIBP family. The cofactor is K(+).

It catalyses the reaction (6R)-NADHX = (6S)-NADHX. The enzyme catalyses (6R)-NADPHX = (6S)-NADPHX. Catalyzes the epimerization of the S- and R-forms of NAD(P)HX, a damaged form of NAD(P)H that is a result of enzymatic or heat-dependent hydration. This is a prerequisite for the S-specific NAD(P)H-hydrate dehydratase to allow the repair of both epimers of NAD(P)HX. The polypeptide is NAD(P)H-hydrate epimerase (Caenorhabditis briggsae).